Here is a 263-residue protein sequence, read N- to C-terminus: Glucosamine-6-phosphate deaminase 2 (263 aa).

Residue D82 is the Proton acceptor; for enolization step of the active site. N151 serves as the catalytic For ring-opening step. The active-site Proton acceptor; for ring-opening step is H153. E158 serves as the catalytic For ring-opening step.

Belongs to the glucosamine/galactosamine-6-phosphate isomerase family. In terms of assembly, homohexamer.

It catalyses the reaction alpha-D-glucosamine 6-phosphate + H2O = beta-D-fructose 6-phosphate + NH4(+). Functionally, catalyzes the reversible conversion of alpha-D-glucosamine 6-phosphate (GlcN-6P) into beta-D-fructose 6-phosphate (Fru-6P) and ammonium ion, a regulatory reaction step in de novo uridine diphosphate-N-acetyl-alpha-D-glucosamine (UDP-GlcNAc) biosynthesis via hexosamine pathway. The sequence is that of Glucosamine-6-phosphate deaminase 2 (GPI2) from Giardia intestinalis (Giardia lamblia).